A 279-amino-acid polypeptide reads, in one-letter code: Lectin 9 (279 aa).

The first 23 residues, 1-23, serve as a signal peptide directing secretion; that stretch reads MALSSALIKIFITFLFLQNHVNS. N116, N139, N235, and N272 each carry an N-linked (GlcNAc...) asparagine glycan.

Belongs to the leguminous lectin family.

Functionally, may be involved in arbuscular mycorrhizal (AM) symbiosis with AM fungi. This chain is Lectin 9, found in Medicago truncatula (Barrel medic).